Consider the following 557-residue polypeptide: MALSTFKREHIKKNLRNDEYDLVIIGGGITGAGIALDASERGMKVALVEMQDFAQGTSSRSTKLVHGGLRYLKQFQIGVVAETGKERAIVYENGPHVTTPEWMLLPMHKGGTFGKFSTSIGLGMYDRLAGVKKSERKKMLSKKETLAKEPLVKKEGLKGGGYYVEYRTDDARLTIEVMKRAAEKGAEIINYTKSEHFTYDKNQQVNGVKVIDKLTNENYTIKAKKVVNAAGPWVDDVRSGDYARNNKKLRLTKGVHVVIDQSKFPLGQAVYFDTEKDGRMIFAIPREGKAYVGTTDTFYDNIKSSPLTTQEDRDYLIDAINYMFPSVNVTDEDIESTWAGIRPLIYEEGKDPSEISRKDEIWEGKSGLLTIAGGKLTGYRHMAQDIVDLVSKRLKKDYGLTFSPCNTKGLAISGGDVGGSKNFDAFVEQKVDVAKGFGIDEDVARRLASKYGSNVDELFNIAQTSQYHDSKLPLEIYVELVYSIQQEMVYKPNDFLVRRSGKMYFNIKDVLDYKDSIIDIMADMLDYSPAQIEAYTEEVEQAIKEAQHGNNQPAVKE.

An FAD-binding site is contributed by 21 to 49; it reads DLVIIGGGITGAGIALDASERGMKVALVE.

This sequence belongs to the FAD-dependent glycerol-3-phosphate dehydrogenase family. It depends on FAD as a cofactor.

Its subcellular location is the cytoplasm. It catalyses the reaction a quinone + sn-glycerol 3-phosphate = dihydroxyacetone phosphate + a quinol. It participates in polyol metabolism; glycerol degradation via glycerol kinase pathway; glycerone phosphate from sn-glycerol 3-phosphate (aerobic route): step 1/1. This chain is Aerobic glycerol-3-phosphate dehydrogenase (glpD), found in Staphylococcus aureus (strain bovine RF122 / ET3-1).